A 244-amino-acid chain; its full sequence is Secreted RxLR effector protein RXLR-C05 (244 aa).

The signal sequence occupies residues 1–21 (MRGAFYVATAFLIASSTRTAA). Over residues 37–46 (LPVGDSDTKS) the composition is skewed to basic and acidic residues. The tract at residues 37–56 (LPVGDSDTKSLPRRSLKGSG) is disordered. A RxLR-dEER motif is present at residues 50–68 (RSLKGSGDRLEIPVAEEER).

It belongs to the RxLR effector family.

The protein localises to the secreted. The protein resides in the host cytoplasm. It is found in the host nucleus. Its function is as follows. Secreted effector that suppresses pattern-triggered immunity (PTI) in plant host. This chain is Secreted RxLR effector protein RXLR-C05, found in Plasmopara halstedii (Downy mildew of sunflower).